The chain runs to 247 residues: Pyridoxine 5'-phosphate synthase (247 aa).

3-amino-2-oxopropyl phosphate is bound at residue Asn7. 9–10 (DH) lines the 1-deoxy-D-xylulose 5-phosphate pocket. Arg18 lines the 3-amino-2-oxopropyl phosphate pocket. His43 functions as the Proton acceptor in the catalytic mechanism. Residues Arg45 and His50 each contribute to the 1-deoxy-D-xylulose 5-phosphate site. Glu70 acts as the Proton acceptor in catalysis. Thr100 is a 1-deoxy-D-xylulose 5-phosphate binding site. His190 functions as the Proton donor in the catalytic mechanism. 3-amino-2-oxopropyl phosphate is bound by residues Gly191 and 212–213 (GH).

The protein belongs to the PNP synthase family. Homooctamer; tetramer of dimers.

The protein localises to the cytoplasm. The catalysed reaction is 3-amino-2-oxopropyl phosphate + 1-deoxy-D-xylulose 5-phosphate = pyridoxine 5'-phosphate + phosphate + 2 H2O + H(+). Its pathway is cofactor biosynthesis; pyridoxine 5'-phosphate biosynthesis; pyridoxine 5'-phosphate from D-erythrose 4-phosphate: step 5/5. Catalyzes the complicated ring closure reaction between the two acyclic compounds 1-deoxy-D-xylulose-5-phosphate (DXP) and 3-amino-2-oxopropyl phosphate (1-amino-acetone-3-phosphate or AAP) to form pyridoxine 5'-phosphate (PNP) and inorganic phosphate. The sequence is that of Pyridoxine 5'-phosphate synthase from Synechococcus sp. (strain WH7803).